The sequence spans 417 residues: NADH-quinone oxidoreductase subunit D (417 aa).

This sequence belongs to the complex I 49 kDa subunit family. NDH-1 is composed of 14 different subunits. Subunits NuoB, C, D, E, F, and G constitute the peripheral sector of the complex.

It localises to the cell inner membrane. It carries out the reaction a quinone + NADH + 5 H(+)(in) = a quinol + NAD(+) + 4 H(+)(out). Functionally, NDH-1 shuttles electrons from NADH, via FMN and iron-sulfur (Fe-S) centers, to quinones in the respiratory chain. The immediate electron acceptor for the enzyme in this species is believed to be ubiquinone. Couples the redox reaction to proton translocation (for every two electrons transferred, four hydrogen ions are translocated across the cytoplasmic membrane), and thus conserves the redox energy in a proton gradient. The protein is NADH-quinone oxidoreductase subunit D of Burkholderia ambifaria (strain MC40-6).